We begin with the raw amino-acid sequence, 212 residues long: Thiamine-phosphate synthase (212 aa).

Residues 40 to 44 (QFREK) and Asn75 contribute to the 4-amino-2-methyl-5-(diphosphooxymethyl)pyrimidine site. The Mg(2+) site is built by Asp76 and Asp95. Residue Ser113 coordinates 4-amino-2-methyl-5-(diphosphooxymethyl)pyrimidine. 139–141 (TSS) is a binding site for 2-[(2R,5Z)-2-carboxy-4-methylthiazol-5(2H)-ylidene]ethyl phosphate. Lys142 serves as a coordination point for 4-amino-2-methyl-5-(diphosphooxymethyl)pyrimidine. 2-[(2R,5Z)-2-carboxy-4-methylthiazol-5(2H)-ylidene]ethyl phosphate is bound by residues Gly171 and 191-192 (IS).

This sequence belongs to the thiamine-phosphate synthase family. Mg(2+) serves as cofactor.

The catalysed reaction is 2-[(2R,5Z)-2-carboxy-4-methylthiazol-5(2H)-ylidene]ethyl phosphate + 4-amino-2-methyl-5-(diphosphooxymethyl)pyrimidine + 2 H(+) = thiamine phosphate + CO2 + diphosphate. It carries out the reaction 2-(2-carboxy-4-methylthiazol-5-yl)ethyl phosphate + 4-amino-2-methyl-5-(diphosphooxymethyl)pyrimidine + 2 H(+) = thiamine phosphate + CO2 + diphosphate. The enzyme catalyses 4-methyl-5-(2-phosphooxyethyl)-thiazole + 4-amino-2-methyl-5-(diphosphooxymethyl)pyrimidine + H(+) = thiamine phosphate + diphosphate. The protein operates within cofactor biosynthesis; thiamine diphosphate biosynthesis; thiamine phosphate from 4-amino-2-methyl-5-diphosphomethylpyrimidine and 4-methyl-5-(2-phosphoethyl)-thiazole: step 1/1. In terms of biological role, condenses 4-methyl-5-(beta-hydroxyethyl)thiazole monophosphate (THZ-P) and 2-methyl-4-amino-5-hydroxymethyl pyrimidine pyrophosphate (HMP-PP) to form thiamine monophosphate (TMP). This chain is Thiamine-phosphate synthase, found in Staphylococcus epidermidis (strain ATCC 35984 / DSM 28319 / BCRC 17069 / CCUG 31568 / BM 3577 / RP62A).